A 356-amino-acid chain; its full sequence is MKKVVLAAGGTGGHIVPAALLCQVLADRGYRCVLYTDQYFLQYTARFPGIKGYVLLPLCKRSGGAVRLLKFCALLAYSCVLSYIKLRSLKPDLVIGFGAYASFPVLLSAWLMSVDAVLHEQNSVMGRVNRVFAGYARVIACGLPLRTVGNKLAHKVAHVGVPTDVKKAVKRPLAGDSINLVILGGSQGLCTFGKTFALAIAELPTNIRGRVFVTQQCGKGQLEVITELYARHGIKHKLSGFFTDMQNIIGEADLIISRAGATTIAEVMAAGRPAIYVPYERSSCSHQLYNAQLIESLGAGLCIEERTLDVSSARDALTNLLGDRNKLQEMSCNAAKHAMPDADAQFCAIVDGLLKG.

UDP-N-acetyl-alpha-D-glucosamine-binding positions include 11-13 (TGG), asparagine 122, serine 186, and glutamine 287.

Belongs to the glycosyltransferase 28 family. MurG subfamily.

The protein resides in the cell inner membrane. The enzyme catalyses di-trans,octa-cis-undecaprenyl diphospho-N-acetyl-alpha-D-muramoyl-L-alanyl-D-glutamyl-meso-2,6-diaminopimeloyl-D-alanyl-D-alanine + UDP-N-acetyl-alpha-D-glucosamine = di-trans,octa-cis-undecaprenyl diphospho-[N-acetyl-alpha-D-glucosaminyl-(1-&gt;4)]-N-acetyl-alpha-D-muramoyl-L-alanyl-D-glutamyl-meso-2,6-diaminopimeloyl-D-alanyl-D-alanine + UDP + H(+). Its pathway is cell wall biogenesis; peptidoglycan biosynthesis. Cell wall formation. Catalyzes the transfer of a GlcNAc subunit on undecaprenyl-pyrophosphoryl-MurNAc-pentapeptide (lipid intermediate I) to form undecaprenyl-pyrophosphoryl-MurNAc-(pentapeptide)GlcNAc (lipid intermediate II). This Anaplasma marginale (strain St. Maries) protein is UDP-N-acetylglucosamine--N-acetylmuramyl-(pentapeptide) pyrophosphoryl-undecaprenol N-acetylglucosamine transferase.